We begin with the raw amino-acid sequence, 100 residues long: NAD(P)H-quinone oxidoreductase subunit 4L, chloroplastic (100 aa).

A run of 3 helical transmembrane segments spans residues 1–21 (MIEN…YGLI), 27–47 (IKVL…LVAF), and 61–81 (FAVF…AIVF).

This sequence belongs to the complex I subunit 4L family. In terms of assembly, NDH is composed of at least 16 different subunits, 5 of which are encoded in the nucleus.

The protein resides in the plastid. The protein localises to the chloroplast thylakoid membrane. The catalysed reaction is a plastoquinone + NADH + (n+1) H(+)(in) = a plastoquinol + NAD(+) + n H(+)(out). It catalyses the reaction a plastoquinone + NADPH + (n+1) H(+)(in) = a plastoquinol + NADP(+) + n H(+)(out). Functionally, NDH shuttles electrons from NAD(P)H:plastoquinone, via FMN and iron-sulfur (Fe-S) centers, to quinones in the photosynthetic chain and possibly in a chloroplast respiratory chain. The immediate electron acceptor for the enzyme in this species is believed to be plastoquinone. Couples the redox reaction to proton translocation, and thus conserves the redox energy in a proton gradient. The sequence is that of NAD(P)H-quinone oxidoreductase subunit 4L, chloroplastic from Chaetosphaeridium globosum (Charophycean green alga).